Here is a 209-residue protein sequence, read N- to C-terminus: FMN-dependent NADH:quinone oxidoreductase 2 (209 aa).

An FMN-binding site is contributed by 17–19 (SAS).

The protein belongs to the azoreductase type 1 family. As to quaternary structure, homodimer. FMN is required as a cofactor.

The catalysed reaction is 2 a quinone + NADH + H(+) = 2 a 1,4-benzosemiquinone + NAD(+). It catalyses the reaction N,N-dimethyl-1,4-phenylenediamine + anthranilate + 2 NAD(+) = 2-(4-dimethylaminophenyl)diazenylbenzoate + 2 NADH + 2 H(+). In terms of biological role, quinone reductase that provides resistance to thiol-specific stress caused by electrophilic quinones. Also exhibits azoreductase activity. Catalyzes the reductive cleavage of the azo bond in aromatic azo compounds to the corresponding amines. The protein is FMN-dependent NADH:quinone oxidoreductase 2 of Lactiplantibacillus plantarum (strain ATCC BAA-793 / NCIMB 8826 / WCFS1) (Lactobacillus plantarum).